The sequence spans 498 residues: MASQGTKRSYEQMETGGERQNATEIRASVGRMVSGIGRFYIQMCTELKLSDYEGRLIQNSITIERMVLSAFDERRNRYLEEHPSAGKDPKKTGGPIYRRRDGKWVRELILYDKEEIRRIWRQANNGEDATAGLTHLMIWHSNLNDATYQRTRALVRTGMDPRMCSLMQGSTLPRRSGAAGAAVKGVGTMVMELIRMIKRGINDRNFWRGENGRRTRIAYERMCNILKGKFQTAAQRAMMDQVRESRNPGNAEIEDLIFLARSALILRGSVAHKSCLPACVYGLAVASGYDFEREGYSLVGIDPFRLLQNSQVFSLIRPNENPAHKSQLVWMACHSAAFEDLRVSSFIRGTRVVPRGQLSTRGVQIASNENMEAMDSNTLELRSRYWAIRTRSGGNTNQQRASAGQISVQPTFSVQRNLPFERATIMAAFTGNTEGRTSDMRTEIIRMMESARPEDVSFQGRGVFELSDEKATNPIVPSFDMNNEGSYFFGDNAEEYDN.

The short motif at 1–18 is the Unconventional nuclear localization signal element; the sequence is MASQGTKRSYEQMETGGE. Residues 1–21 form a disordered region; the sequence is MASQGTKRSYEQMETGGERQN. Residues 198 to 216 carry the Bipartite nuclear localization signal motif; it reads KRGINDRNFWRGENGRRTR.

It belongs to the influenza viruses nucleoprotein family. As to quaternary structure, homomultimerizes to form the nucleocapsid. May bind host exportin-1/XPO1. Binds to viral genomic RNA. Protein-RNA contacts are mediated by a combination of electrostatic interactions between positively charged residues and the phosphate backbone and planar interactions between aromatic side chains and bases. In terms of processing, late in virus-infected cells, may be cleaved from a 56-kDa protein to a 53-kDa protein by a cellular caspase. This cleavage might be a marker for the onset of apoptosis in infected cells or have a specific function in virus host interaction.

It localises to the virion. The protein resides in the host nucleus. Encapsidates the negative strand viral RNA, protecting it from nucleases. The encapsidated genomic RNA is termed the ribonucleoprotein (RNP) and serves as template for transcription and replication. The RNP needs to be localized in the host nucleus to start an infectious cycle, but is too large to diffuse through the nuclear pore complex. NP comprises at least 2 nuclear localization signals that are responsible for the active RNP import into the nucleus through cellular importin alpha/beta pathway. Later in the infection, nclear export of RNPs are mediated through viral proteins NEP interacting with M1 which binds nucleoproteins. It is possible that nucleoprotein binds directly host exportin-1/XPO1 and plays an active role in RNPs nuclear export. M1 interaction with RNP seems to hide nucleoprotein's nuclear localization signals. Soon after a virion infects a new cell, M1 dissociates from the RNP under acidification of the virion driven by M2 protein. Dissociation of M1 from RNP unmasks nucleoprotein's nuclear localization signals, targeting the RNP to the nucleus. The polypeptide is Nucleoprotein (Influenza A virus (strain A/Chicken/Hong Kong/96.1/2002 H5N1 genotype Y)).